A 165-amino-acid polypeptide reads, in one-letter code: Small ribosomal subunit protein uS5 (165 aa).

The region spanning 13–76 (LEEKVLVVNR…EAAKKNLMKI (64 aa)) is the S5 DRBM domain.

It belongs to the universal ribosomal protein uS5 family. Part of the 30S ribosomal subunit. Contacts proteins S4 and S8.

Functionally, with S4 and S12 plays an important role in translational accuracy. Its function is as follows. Located at the back of the 30S subunit body where it stabilizes the conformation of the head with respect to the body. The polypeptide is Small ribosomal subunit protein uS5 (Chlamydia pneumoniae (Chlamydophila pneumoniae)).